Reading from the N-terminus, the 315-residue chain is Voltage-dependent calcium channel gamma-3 subunit (315 aa).

4 helical membrane-spanning segments follow: residues 8–28 (IQMLITTVGAFAAFSLMTIAV), 104–124 (SSVFPILSVTLLFFGGLCVAA), 135–155 (ILSAGIFFVSAGLSNIIGIIV), and 181–201 (FGAFSFIIAEIVGVVAVHIYI). Ser-248 is modified (phosphoserine).

The protein belongs to the PMP-22/EMP/MP20 family. CACNG subfamily. In terms of assembly, the L-type calcium channel is composed of five subunits: alpha-1, alpha-2/delta, beta and gamma. Acts as an auxiliary subunit for AMPA-selective glutamate receptors (AMPARs). Found in a complex with GRIA1, GRIA2, GRIA3, GRIA4, CNIH2, CNIH3, CACNG2, CACNG4, CACNG5, CACNG7 and CACNG8. Interacts with AP4M1 and GRIA1; associates GRIA1 with the adaptor protein complex 4 (AP-4) to target GRIA1 to the somatodendritic compartment of neurons.

It is found in the membrane. In terms of biological role, regulates the trafficking to the somatodendritic compartment and gating properties of AMPA-selective glutamate receptors (AMPARs). Promotes their targeting to the cell membrane and synapses and modulates their gating properties by slowing their rates of activation, deactivation and desensitization. Does not show subunit-specific AMPA receptor regulation and regulates all AMPAR subunits. Thought to stabilize the calcium channel in an inactivated (closed) state. The sequence is that of Voltage-dependent calcium channel gamma-3 subunit (CACNG3) from Homo sapiens (Human).